We begin with the raw amino-acid sequence, 159 residues long: UPF0262 protein RD1_1069 (159 aa).

It belongs to the UPF0262 family.

This Roseobacter denitrificans (strain ATCC 33942 / OCh 114) (Erythrobacter sp. (strain OCh 114)) protein is UPF0262 protein RD1_1069.